We begin with the raw amino-acid sequence, 1100 residues long: cGMP-inhibited 3',5'-cyclic phosphodiesterase 3B (1100 aa).

Basic and acidic residues predominate over residues 1–11; the sequence is MRKDERERDAP. The interval 1–28 is interaction with RAPGEF3; that stretch reads MRKDERERDAPAMRSPPPPPASAASPPE. Residues 1 to 29 form a disordered region; sequence MRKDERERDAPAMRSPPPPPASAASPPES. Ser-15 is modified (phosphoserine). A run of 6 helical transmembrane segments spans residues 69-89, 110-130, 140-160, 170-190, 198-218, and 225-245; these read AGARLSLGVLAAFVLAALLGA, LSLSPLFSIACAFFFLTCFLT, AGSWWLLALPACCYLGDFAAW, PAAAGRLCLVLSCVGLLTLAP, VLVLLFAGLVWWVSFSGLGAL, and LLSCLVGGAGCLLALGLDHFF. Residue Ser-273 is modified to Phosphoserine; by PKB/AKT1 or PKB/AKT2. Ser-274 and Ser-421 each carry phosphoserine. Disordered regions lie at residues 400–423 and 570–590; these read RKLHKGLSGRTSFPTPQLRRSSGA and EPDGTDHPSEKSGEEDSSVFS. The span at 408-423 shows a compositional bias: polar residues; it reads GRTSFPTPQLRRSSGA. Positions 415 to 439 are interaction with PIK3R6; sequence PQLRRSSGASSLLTNEHCSRWDRSS. Over residues 573 to 583 the composition is skewed to basic and acidic residues; it reads GTDHPSEKSGE. A PDEase domain is found at 627-1061; it reads PNIDQEVSLD…KIWKEIIEEE (435 aa). Residue His-713 is the Proton donor of the active site. His-713 contributes to the AMP binding site. 4 residues coordinate Mg(2+): His-717, His-797, Asp-798, and Asp-913. Positions 798, 913, and 964 each coordinate AMP. The segment covering 993–1024 has biased composition (acidic residues); the sequence is EEGDDTESDDDDDDDDGDGGEELDSDDEETED. The tract at residues 993 to 1033 is disordered; sequence EEGDDTESDDDDDDDDGDGGEELDSDDEETEDNLNPKPQRR. Residues 1044-1079 are a coiled coil; the sequence is MHHLTENHKIWKEIIEEEEEKCKAEGNKLQVDNASL.

It belongs to the cyclic nucleotide phosphodiesterase family. PDE3 subfamily. As to quaternary structure, homodimer. Interacts with PIK3CG; regulates PDE3B activity and thereby cAMP levels in cells. Interacts with RAPGEF3 and PIK3R6; form a signaling complex that regulates phosphatidylinositol 3-kinase gamma in angiogenesis. Interacts with ABHD15; this interaction regulates PDE3B's stability and expression and, thereby, impacts the antilipolytic action of insulin. Mg(2+) is required as a cofactor. It depends on Mn(2+) as a cofactor. In terms of processing, phosphorylation at Ser-273 mediates insulin-induced activation of PDE3B. Abundant in adipose tissues.

It localises to the membrane. The enzyme catalyses a nucleoside 3',5'-cyclic phosphate + H2O = a nucleoside 5'-phosphate + H(+). It carries out the reaction 3',5'-cyclic AMP + H2O = AMP + H(+). It catalyses the reaction 3',5'-cyclic GMP + H2O = GMP + H(+). With respect to regulation, inhibited by cGMP. Its function is as follows. Cyclic nucleotide phosphodiesterase with a dual-specificity for the second messengers cAMP and cGMP, which are key regulators of many important physiological processes. Regulates angiogenesis by inhibiting the cAMP-dependent guanine nucleotide exchange factor RAPGEF3 and downstream phosphatidylinositol 3-kinase gamma-mediated signaling. Controls cardiac contractility by reducing cAMP concentration in cardiocytes. The polypeptide is cGMP-inhibited 3',5'-cyclic phosphodiesterase 3B (Mus musculus (Mouse)).